Consider the following 528-residue polypeptide: Probable histone-arginine methyltransferase 1.4 (528 aa).

At Met-1 the chain carries N-acetylmethionine. The 316-residue stretch at 144 to 459 (EAASAKMYFH…QSYTINLTLS (316 aa)) folds into the SAM-dependent MTase PRMT-type domain. S-adenosyl-L-methionine is bound by residues Gln-161, Arg-170, Gly-194, Glu-216, and Glu-246. Catalysis depends on residues Glu-260 and Glu-269. Residue Thr-274 participates in S-adenosyl-L-methionine binding.

The protein belongs to the class I-like SAM-binding methyltransferase superfamily. Protein arginine N-methyltransferase family.

Its subcellular location is the nucleus. It is found in the cytoplasm. It catalyses the reaction L-arginyl-[protein] + 2 S-adenosyl-L-methionine = N(omega),N(omega)-dimethyl-L-arginyl-[protein] + 2 S-adenosyl-L-homocysteine + 2 H(+). In terms of biological role, methylates (mono- and asymmetric dimethylation) the guanidino nitrogens of arginyl residues in several proteins involved in DNA packaging, transcription regulation, and mRNA stability. Recruited to promoters upon gene activation, methylates histone H3 and activates transcription via chromatin remodeling. The chain is Probable histone-arginine methyltransferase 1.4 (PRMT14) from Arabidopsis thaliana (Mouse-ear cress).